We begin with the raw amino-acid sequence, 61 residues long: uncharacterized protein (61 aa).

Residues 34–61 (TDVEDIDRLISMLDDLEAKYERFKKDWE) are a coiled coil.

This is an uncharacterized protein from Bacillus subtilis (strain 168).